We begin with the raw amino-acid sequence, 432 residues long: Trigger factor (432 aa).

Residues 163–248 form the PPIase FKBP-type domain; it reads GDVVVLDFAA…VHAVKERRLP (86 aa).

It belongs to the FKBP-type PPIase family. Tig subfamily.

The protein resides in the cytoplasm. It catalyses the reaction [protein]-peptidylproline (omega=180) = [protein]-peptidylproline (omega=0). Its function is as follows. Involved in protein export. Acts as a chaperone by maintaining the newly synthesized protein in an open conformation. Functions as a peptidyl-prolyl cis-trans isomerase. The polypeptide is Trigger factor (Nitratidesulfovibrio vulgaris (strain DSM 19637 / Miyazaki F) (Desulfovibrio vulgaris)).